The sequence spans 274 residues: Phloretin hydrolase (274 aa).

Residues H123, E154, H251, and E255 each contribute to the Zn(2+) site.

The protein belongs to the DAPG/phloretin hydrolase family. As to quaternary structure, homodimer. Zn(2+) serves as cofactor.

Its subcellular location is the cytoplasm. It catalyses the reaction phloretin + H2O = phloretate + 1,3,5-trihydroxybenzene + H(+). In terms of biological role, catalyzes the hydrolytic C-C cleavage of phloretin to phloroglucinol and 3-(4-hydroxyphenyl)propionic acid during flavonoid degradation. Also hydrolyzes other C-acylated phenols. The sequence is that of Phloretin hydrolase (phy) from Eubacterium ramulus.